A 346-amino-acid polypeptide reads, in one-letter code: Mitogen-activated protein kinase kinase 1c (346 aa).

The Protein kinase domain maps to 70 to 332; it reads LELVRFLGKG…TTDLLKHPFL (263 aa). Residues 76 to 84 and Lys99 each bind ATP; that span reads LGKGAGGTV. Residue Asp194 is the Proton acceptor of the active site.

This sequence belongs to the protein kinase superfamily. STE Ser/Thr protein kinase family. MAP kinase kinase subfamily.

The enzyme catalyses L-seryl-[protein] + ATP = O-phospho-L-seryl-[protein] + ADP + H(+). It carries out the reaction L-threonyl-[protein] + ATP = O-phospho-L-threonyl-[protein] + ADP + H(+). It catalyses the reaction L-tyrosyl-[protein] + ATP = O-phospho-L-tyrosyl-[protein] + ADP + H(+). The CERK1, MEKK1a/b, MKK1a/b/c and MPK4a/b proteins are involved in pathogen defense. The pathway induces rapid growth inhibition, cell wall depositions and accumulation of defense-related transcripts. This protein is required for full defense response to fungal pathogen chitin. This Physcomitrium patens (Spreading-leaved earth moss) protein is Mitogen-activated protein kinase kinase 1c.